Reading from the N-terminus, the 364-residue chain is DNA replication and repair protein RecF (364 aa).

30-37 contacts ATP; the sequence is GNNAQGKT.

Belongs to the RecF family.

The protein resides in the cytoplasm. In terms of biological role, the RecF protein is involved in DNA metabolism; it is required for DNA replication and normal SOS inducibility. RecF binds preferentially to single-stranded, linear DNA. It also seems to bind ATP. The polypeptide is DNA replication and repair protein RecF (Streptococcus uberis (strain ATCC BAA-854 / 0140J)).